The chain runs to 418 residues: Perilipin-1 homolog (418 aa).

The required for lipid droplet localization stretch occupies residues 211 to 275 (LTIGQRVKNL…EKKTWVIEKS (65 aa)).

This sequence belongs to the perilipin family. In terms of tissue distribution, expressed in intestinal and epidermal cells. Expressed in the muscle and hypodermis.

Its subcellular location is the lipid droplet. In terms of biological role, lipid droplet-associated protein which plays a role in lipid droplet clustering. This is Perilipin-1 homolog from Caenorhabditis elegans.